A 355-amino-acid polypeptide reads, in one-letter code: 3-dehydroquinate synthase (355 aa).

NAD(+)-binding positions include 71 to 76 (EGEASK), 105 to 109 (GVVGD), 129 to 130 (TS), Lys-142, and Lys-151. 3 residues coordinate Zn(2+): Glu-184, His-246, and His-263.

The protein belongs to the sugar phosphate cyclases superfamily. Dehydroquinate synthase family. Co(2+) is required as a cofactor. It depends on Zn(2+) as a cofactor. The cofactor is NAD(+).

The protein localises to the cytoplasm. The catalysed reaction is 7-phospho-2-dehydro-3-deoxy-D-arabino-heptonate = 3-dehydroquinate + phosphate. The protein operates within metabolic intermediate biosynthesis; chorismate biosynthesis; chorismate from D-erythrose 4-phosphate and phosphoenolpyruvate: step 2/7. Catalyzes the conversion of 3-deoxy-D-arabino-heptulosonate 7-phosphate (DAHP) to dehydroquinate (DHQ). The chain is 3-dehydroquinate synthase from Streptococcus thermophilus (strain CNRZ 1066).